Consider the following 123-residue polypeptide: MKLLLLALPMLVLLPQVIPAYSGEKKCWNRSGHCRKQCKDGEAVKDTCKNLRACCVPSNEDHRRVPTTSPTPLSDSTPGIIDDILTVRFTTDYFEVSSKKDMIEESEAGRGTETSLPNVHHSS.

The signal sequence occupies residues 1–19 (MKLLLLALPMLVLLPQVIP). Intrachain disulfides connect cysteine 27-cysteine 54, cysteine 34-cysteine 48, and cysteine 38-cysteine 55. A propeptide spanning residues 65 to 123 (VPTTSPTPLSDSTPGIIDDILTVRFTTDYFEVSSKKDMIEESEAGRGTETSLPNVHHSS) is cleaved from the precursor. Positions 100–110 (KDMIEESEAGR) are enriched in basic and acidic residues. The segment at 100 to 123 (KDMIEESEAGRGTETSLPNVHHSS) is disordered. Residues 112–123 (TETSLPNVHHSS) show a composition bias toward polar residues.

This sequence belongs to the beta-defensin family. The three-dimensional structure formed by the three intramolecular disulfide bridges is indispensable for antimicrobial activity.

It is found in the secreted. Functionally, host defense peptide that exhibits antimicrobial activity against both Gram-negative bacteria, such as E.coli and S.typhimurium, and Gram-positive bacteria, such as S.aureus and B.subtilis. Inhibits cell adhesion of E.coli on intestinal epithelial enterocytes. Causes rapid permeabilization of both the outer and inner membrane of E.coli, leading to morphological alterations on the bacterial surface. Binds to bacterial lipopolysaccharides (LPS) with high affinity, and may thereby be involved in immunoregulation through LPS neutralization. May contribute to epididymal innate immunity and protect the sperm against attack by microorganisms. This Gorilla gorilla gorilla (Western lowland gorilla) protein is Defensin beta 118 (DEFB118).